The chain runs to 524 residues: Nucleobase-ascorbate transporter 2 (524 aa).

Transmembrane regions (helical) follow at residues 41–61 (YILALGTAVMIPSILVPMMGG), 69–89 (VVQTLLFLQGVNTLLQTLFGT), 91–111 (LPTVIGGSYAFMVPIISIIHD), 133–153 (GAIIVASSVQIILGFSQMWAI), 155–175 (SRFFSPIGMVPVIALTGFGLF), 179–199 (FPVVGNCVEIGLPMLILFVIF), 217–237 (FALIIALIIVWAYAHVLTASG), 282–302 (AFAMMAAVLVSLIESTGAFKA), 359–379 (RVIQISAGFMIFFSMLGKFGA), 380–400 (LFASIPFTIFAAVYCVLFGLV), 419–439 (LFIVGVSLFLGLSIPEYFRDF), and 457–477 (DFLNTIFLSSPMVALMVAVFL).

It belongs to the nucleobase:cation symporter-2 (NCS2) (TC 2.A.40) family. As to expression, expressed in cotyledons 10 days after imbibition (DAI). Expressed in the minor and major veins of cotyledons and leaves, in the shoot apex and pedicels. Expressed in the root meristems, root tips and lateral root primordia.

Its subcellular location is the membrane. The protein is Nucleobase-ascorbate transporter 2 (NAT2) of Arabidopsis thaliana (Mouse-ear cress).